The sequence spans 89 residues: Mu-theraphotoxin-Phlo1a (89 aa).

The signal sequence occupies residues 1 to 22 (MKVSVLITLAVLGVMFVWTSAA). Positions 23–52 (EQEDHGSDRRDSPALLKNLLGEEVFQSEER) are excised as a propeptide. 3 disulfides stabilise this stretch: C54–C68, C61–C73, and C67–C81. Position 87 is an isoleucine amide (I87).

Belongs to the neurotoxin 10 (Hwtx-1) family. 39 (Jztx-34) subfamily. In terms of tissue distribution, expressed by the venom gland.

The protein localises to the secreted. In terms of biological role, gating-modifier toxin that inhibits voltage-gated sodium channel Nav by shifting the threshold for channel activation to more positive potentials. This toxin moderately inhibits human Nav1.7/SCN9A (IC(50)=459 nM) and weakly inhibits hNav1.2/SCN2A and hNav1.5/SCN5A (&lt;20% inhibition at 1 uM peptide). Inhibition of Nav1.7 is voltage-dependent, with lower inhibition at more positive test pulses. This Phlogius sp. (Tarantula spider) protein is Mu-theraphotoxin-Phlo1a.